The sequence spans 410 residues: 3-phosphoshikimate 1-carboxyvinyltransferase (410 aa).

Positions 21, 22, and 26 each coordinate 3-phosphoshikimate. Lys-21 contacts phosphoenolpyruvate. Phosphoenolpyruvate contacts are provided by Gly-69 and Arg-97. Ser-143, Ser-144, Gln-145, Ser-171, Asp-288, and Lys-315 together coordinate 3-phosphoshikimate. Residue Gln-145 participates in phosphoenolpyruvate binding. Catalysis depends on Asp-288, which acts as the Proton acceptor. Phosphoenolpyruvate is bound by residues Arg-319, Arg-364, and Lys-389.

Belongs to the EPSP synthase family. In terms of assembly, monomer.

The protein resides in the cytoplasm. The enzyme catalyses 3-phosphoshikimate + phosphoenolpyruvate = 5-O-(1-carboxyvinyl)-3-phosphoshikimate + phosphate. The protein operates within metabolic intermediate biosynthesis; chorismate biosynthesis; chorismate from D-erythrose 4-phosphate and phosphoenolpyruvate: step 6/7. In terms of biological role, catalyzes the transfer of the enolpyruvyl moiety of phosphoenolpyruvate (PEP) to the 5-hydroxyl of shikimate-3-phosphate (S3P) to produce enolpyruvyl shikimate-3-phosphate and inorganic phosphate. The chain is 3-phosphoshikimate 1-carboxyvinyltransferase from Bacteroides fragilis (strain YCH46).